Here is a 276-residue protein sequence, read N- to C-terminus: 3-methyl-2-oxobutanoate hydroxymethyltransferase (276 aa).

Mg(2+)-binding residues include aspartate 46 and aspartate 85. Residues aspartate 46–serine 47, aspartate 85, and lysine 115 each bind 3-methyl-2-oxobutanoate. Residue glutamate 117 participates in Mg(2+) binding. Glutamate 184 (proton acceptor) is an active-site residue.

This sequence belongs to the PanB family. In terms of assembly, homodecamer; pentamer of dimers. Mg(2+) is required as a cofactor.

It localises to the cytoplasm. The catalysed reaction is 3-methyl-2-oxobutanoate + (6R)-5,10-methylene-5,6,7,8-tetrahydrofolate + H2O = 2-dehydropantoate + (6S)-5,6,7,8-tetrahydrofolate. It functions in the pathway cofactor biosynthesis; (R)-pantothenate biosynthesis; (R)-pantoate from 3-methyl-2-oxobutanoate: step 1/2. Catalyzes the reversible reaction in which hydroxymethyl group from 5,10-methylenetetrahydrofolate is transferred onto alpha-ketoisovalerate to form ketopantoate. The protein is 3-methyl-2-oxobutanoate hydroxymethyltransferase of Heliobacterium modesticaldum (strain ATCC 51547 / Ice1).